We begin with the raw amino-acid sequence, 281 residues long: NAC domain-containing protein 6 (281 aa).

An NAC domain is found at 4–156; the sequence is LPVGSRFCPT…QDALTGFADQ (153 aa). Disordered regions lie at residues 84 to 109 and 211 to 249; these read GGSEGGTWRSNDGKKEIKDGHMQKGD and LEGHEDREQPEEAELTVTQQQQQQQQQQQRQEDCDVTQE. Residues 94 to 109 are compositionally biased toward basic and acidic residues; sequence NDGKKEIKDGHMQKGD. Residues 109-162 mediate DNA binding; the sequence is DGLRASDDLQKVVLCRIRYKKEANVNEFGLVNHQAHQTQDALTGFADQLEMMLE. A compositionally biased stretch (low complexity) spans 229–239; that stretch reads QQQQQQQQQQQ.

The protein localises to the nucleus. In Arabidopsis thaliana (Mouse-ear cress), this protein is NAC domain-containing protein 6 (NAC006).